The following is a 410-amino-acid chain: E3 ubiquitin-protein ligase PRT1 (410 aa).

2 RING-type zinc fingers span residues 26–66 (CCVC…PICR) and 192–232 (CSAC…QECN). A ZZ-type zinc finger spans residues 306–370 (HFGAGCDSCG…RLELARSPQV (65 aa)). Positions 311, 314, 326, 329, 338, 341, 356, and 360 each coordinate Zn(2+). The tract at residues 385-410 (ISNEGMDTDEGEEGPPGSSNESSSTE) is disordered. Residues 399 to 410 (PPGSSNESSSTE) are compositionally biased toward low complexity.

Its subcellular location is the cytoplasm. The catalysed reaction is S-ubiquitinyl-[E2 ubiquitin-conjugating enzyme]-L-cysteine + [acceptor protein]-L-lysine = [E2 ubiquitin-conjugating enzyme]-L-cysteine + N(6)-ubiquitinyl-[acceptor protein]-L-lysine.. It functions in the pathway protein modification; protein ubiquitination. Its function is as follows. E3 ubiquitin-protein ligase that mediates ubiquitination and subsequent proteasomal degradation of target proteins. Functions in the N-end rule pathway of protein degradation, where it specifically recognizes and ubiquitinates proteins with a N-terminal bulky aromatic amino acid (Phe). Does not act on aliphatic hydrophobic and basic N-terminal residues (Arg or Leu) containing proteins. The protein is E3 ubiquitin-protein ligase PRT1 (PRT1) of Arabidopsis thaliana (Mouse-ear cress).